Reading from the N-terminus, the 535-residue chain is Serine/threonine-protein kinase C (535 aa).

In terms of domain architecture, Protein kinase spans 12-277 (YRIIETLGRG…AMAQTLQGNF (266 aa)). ATP is bound by residues 18-26 (LGRGGFGET) and K43. The Proton acceptor role is filled by D142. The segment at 371–535 (NNPPPAVEEP…GEKPIDPEQN (165 aa)) is disordered. Positions 402 to 421 (SPIPTPATPSPEPTPSPSPS) are enriched in pro residues. A compositionally biased stretch (low complexity) spans 422 to 435 (PETTSSPTEDTITP). 2 stretches are compositionally biased toward pro residues: residues 446-464 (APIP…PQPS) and 472-498 (TPAP…PTPQ).

This sequence belongs to the protein kinase superfamily. Ser/Thr protein kinase family.

It carries out the reaction L-seryl-[protein] + ATP = O-phospho-L-seryl-[protein] + ADP + H(+). The catalysed reaction is L-threonyl-[protein] + ATP = O-phospho-L-threonyl-[protein] + ADP + H(+). The chain is Serine/threonine-protein kinase C (spkC) from Synechocystis sp. (strain ATCC 27184 / PCC 6803 / Kazusa).